A 178-amino-acid polypeptide reads, in one-letter code: CASP-like protein 4D1 (178 aa).

Residues 1 to 14 lie on the Cytoplasmic side of the membrane; it reads MAPPPPSPPSVTLR. Residues 15-35 traverse the membrane as a helical segment; sequence TVLLLLRVLTAAFLVITVVLI. The Extracellular segment spans residues 36-60; the sequence is STNTVTLEVSSTSIKMRFNDVYAYR. The chain crosses the membrane as a helical span at residues 61–81; the sequence is YMLSAAVIGLLYAVVQLFLTI. Residues 82–149 are Cytoplasmic-facing; it reads SQFATGTTHP…KFFSKGYASA (68 aa). A helical transmembrane segment spans residues 150-170; the sequence is SLLLFAFVSLAVLSVFSSLAL. Residues 171 to 178 lie on the Extracellular side of the membrane; that stretch reads SKRPIQVS.

It belongs to the Casparian strip membrane proteins (CASP) family. Homodimer and heterodimers.

It localises to the cell membrane. The protein is CASP-like protein 4D1 of Arabidopsis lyrata subsp. lyrata (Lyre-leaved rock-cress).